A 239-amino-acid chain; its full sequence is 2,3,4,5-tetrahydropyridine-2,6-dicarboxylate N-acetyltransferase (239 aa).

It belongs to the transferase hexapeptide repeat family. DapH subfamily.

It catalyses the reaction (S)-2,3,4,5-tetrahydrodipicolinate + acetyl-CoA + H2O = L-2-acetamido-6-oxoheptanedioate + CoA. The protein operates within amino-acid biosynthesis; L-lysine biosynthesis via DAP pathway; LL-2,6-diaminopimelate from (S)-tetrahydrodipicolinate (acetylase route): step 1/3. Its function is as follows. Catalyzes the transfer of an acetyl group from acetyl-CoA to tetrahydrodipicolinate. In Staphylococcus aureus (strain Newman), this protein is 2,3,4,5-tetrahydropyridine-2,6-dicarboxylate N-acetyltransferase.